The following is a 355-amino-acid chain: Erythronate-4-phosphate dehydrogenase (355 aa).

Ser45 and Thr66 together coordinate substrate. Residue Asp146 participates in NAD(+) binding. The active site involves Arg206. Asp229 provides a ligand contact to NAD(+). The active site involves Glu234. Catalysis depends on His251, which acts as the Proton donor. Gly254 contacts NAD(+). Tyr255 is a substrate binding site.

Belongs to the D-isomer specific 2-hydroxyacid dehydrogenase family. PdxB subfamily. In terms of assembly, homodimer.

Its subcellular location is the cytoplasm. The catalysed reaction is 4-phospho-D-erythronate + NAD(+) = (R)-3-hydroxy-2-oxo-4-phosphooxybutanoate + NADH + H(+). It participates in cofactor biosynthesis; pyridoxine 5'-phosphate biosynthesis; pyridoxine 5'-phosphate from D-erythrose 4-phosphate: step 2/5. Catalyzes the oxidation of erythronate-4-phosphate to 3-hydroxy-2-oxo-4-phosphonooxybutanoate. This chain is Erythronate-4-phosphate dehydrogenase, found in Acinetobacter baumannii (strain AB307-0294).